The following is a 407-amino-acid chain: 4-hydroxy-3-methylbut-2-en-1-yl diphosphate synthase (ferredoxin) (407 aa).

Positions 316, 319, 350, and 357 each coordinate [4Fe-4S] cluster.

The protein belongs to the IspG family. It depends on [4Fe-4S] cluster as a cofactor.

The enzyme catalyses (2E)-4-hydroxy-3-methylbut-2-enyl diphosphate + 2 oxidized [2Fe-2S]-[ferredoxin] + H2O = 2-C-methyl-D-erythritol 2,4-cyclic diphosphate + 2 reduced [2Fe-2S]-[ferredoxin] + H(+). The protein operates within isoprenoid biosynthesis; isopentenyl diphosphate biosynthesis via DXP pathway; isopentenyl diphosphate from 1-deoxy-D-xylulose 5-phosphate: step 5/6. Its function is as follows. Converts 2C-methyl-D-erythritol 2,4-cyclodiphosphate (ME-2,4cPP) into 1-hydroxy-2-methyl-2-(E)-butenyl 4-diphosphate. The chain is 4-hydroxy-3-methylbut-2-en-1-yl diphosphate synthase (ferredoxin) from Cyanothece sp. (strain PCC 7425 / ATCC 29141).